A 150-amino-acid polypeptide reads, in one-letter code: Arginine repressor (150 aa).

The protein belongs to the ArgR family.

It localises to the cytoplasm. It participates in amino-acid biosynthesis; L-arginine biosynthesis [regulation]. Its function is as follows. Regulates arginine biosynthesis genes. The polypeptide is Arginine repressor (Desulforudis audaxviator (strain MP104C)).